A 148-amino-acid chain; its full sequence is Large ribosomal subunit protein bL9 (148 aa).

Belongs to the bacterial ribosomal protein bL9 family.

Its function is as follows. Binds to the 23S rRNA. In Lachnoclostridium phytofermentans (strain ATCC 700394 / DSM 18823 / ISDg) (Clostridium phytofermentans), this protein is Large ribosomal subunit protein bL9.